Here is a 201-residue protein sequence, read N- to C-terminus: FMN-dependent NADH:quinone oxidoreductase (201 aa).

FMN contacts are provided by residues Ser10, 16–18 (SQS), 96–99 (MYNF), and 140–143 (SRGG).

Belongs to the azoreductase type 1 family. As to quaternary structure, homodimer. Requires FMN as cofactor.

The catalysed reaction is 2 a quinone + NADH + H(+) = 2 a 1,4-benzosemiquinone + NAD(+). It carries out the reaction N,N-dimethyl-1,4-phenylenediamine + anthranilate + 2 NAD(+) = 2-(4-dimethylaminophenyl)diazenylbenzoate + 2 NADH + 2 H(+). In terms of biological role, quinone reductase that provides resistance to thiol-specific stress caused by electrophilic quinones. Also exhibits azoreductase activity. Catalyzes the reductive cleavage of the azo bond in aromatic azo compounds to the corresponding amines. The polypeptide is FMN-dependent NADH:quinone oxidoreductase (Escherichia coli O9:H4 (strain HS)).